The sequence spans 91 residues: Small ribosomal subunit protein bS20 (91 aa).

Over residues 1 to 18 the composition is skewed to basic and acidic residues; it reads MPLHKSAEKRLRQSDRKN. Positions 1–25 are disordered; it reads MPLHKSAEKRLRQSDRKNARNRARK.

The protein belongs to the bacterial ribosomal protein bS20 family.

Binds directly to 16S ribosomal RNA. The chain is Small ribosomal subunit protein bS20 from Chlorobium phaeovibrioides (strain DSM 265 / 1930) (Prosthecochloris vibrioformis (strain DSM 265)).